The chain runs to 271 residues: MAIITKVSAQKRQGRYNIFLDQEYAFSVSEKTLAEFVLLKGQELSPQKINEILDYEASAKASDLAARYLSYQPRTIKEVTDYLSQHEISRSAAKRAVNELTHLGYLDDAAYARLFVKNNLQVGKNGPGAVRRDLKKKGIDDDLIEAALADVTDEEWAGVGKRLVKSLLGQQGKIAKREVDRKMQTKLLSHGFSGSLAQAVTQDLVPEADEDQERAALVKQGLKAYKRFKRYEPGVREQKMRQYLYSHGFSGDEISAFLVGEIIPLEELEEY.

Belongs to the RecX family.

It is found in the cytoplasm. Functionally, modulates RecA activity. The chain is Regulatory protein RecX from Lactobacillus delbrueckii subsp. bulgaricus (strain ATCC BAA-365 / Lb-18).